The following is a 779-amino-acid chain: DNA topoisomerase 1 (779 aa).

Residues 1–111 (MKLVIVESPA…VESDDFFKRV (111 aa)) form the Toprim domain. Residues Glu-7 and Asp-80 each coordinate Mg(2+). The region spanning 132-568 (DTNLVNAQQA…FWSGFNNNIE (437 aa)) is the Topo IA-type catalytic domain. The tract at residues 166–171 (SAGRVQ) is interaction with DNA. The active-site O-(5'-phospho-DNA)-tyrosine intermediate is Tyr-304. The C4-type zinc finger occupies 600 to 627 (CPSCKTGQLSLKLGKFGAFLACSNYPEC).

This sequence belongs to the type IA topoisomerase family. As to quaternary structure, monomer. Mg(2+) serves as cofactor.

It carries out the reaction ATP-independent breakage of single-stranded DNA, followed by passage and rejoining.. Releases the supercoiling and torsional tension of DNA, which is introduced during the DNA replication and transcription, by transiently cleaving and rejoining one strand of the DNA duplex. Introduces a single-strand break via transesterification at a target site in duplex DNA. The scissile phosphodiester is attacked by the catalytic tyrosine of the enzyme, resulting in the formation of a DNA-(5'-phosphotyrosyl)-enzyme intermediate and the expulsion of a 3'-OH DNA strand. The free DNA strand then undergoes passage around the unbroken strand, thus removing DNA supercoils. Finally, in the religation step, the DNA 3'-OH attacks the covalent intermediate to expel the active-site tyrosine and restore the DNA phosphodiester backbone. This chain is DNA topoisomerase 1, found in Rickettsia typhi (strain ATCC VR-144 / Wilmington).